The primary structure comprises 496 residues: Signal recognition particle subunit SRP54 1 (496 aa).

Positions 1 to 296 (MVLAQLGGSI…DVKPFVSRLL (296 aa)) are G-domain. Residues 108–115 (GLQGSGKT), 191–195 (DTSGR), and 249–252 (TKMD) each bind GTP. The segment at 297–496 (GMGDLSGLVN…MGMFGGGGGE (200 aa)) is M-domain.

Belongs to the GTP-binding SRP family. SRP54 subfamily. Component of a signal recognition particle (SRP) complex that consists of a 7SL RNA molecule of 300 nucleotides and six protein subunits: SRP72, SRP68, SRP54, SRP19, SRP14 and SRP9.

The protein resides in the cytoplasm. The protein localises to the endoplasmic reticulum. It catalyses the reaction GTP + H2O = GDP + phosphate + H(+). In terms of biological role, component of the signal recognition particle (SRP) complex, a ribonucleoprotein complex that mediates the cotranslational targeting of secretory and membrane proteins to the endoplasmic reticulum (ER). As part of the SRP complex, associates with the SRP receptor (SR) component SRPRA to target secretory proteins to the endoplasmic reticulum membrane. Binds to the signal sequence of presecretory proteins when they emerge from the ribosomes. Displays basal GTPase activity, and stimulates reciprocal GTPase activation of the SR subunit SRPRA. Forms a guanosine 5'-triphosphate (GTP)-dependent complex with the SR subunit SRPRA. SR compaction and GTPase mediated rearrangement of SR drive SRP-mediated cotranslational protein translocation into the ER. Requires the presence of SRP9/SRP14 and/or SRP19 to stably interact with RNA. The protein is Signal recognition particle subunit SRP54 1 of Solanum lycopersicum (Tomato).